The following is a 376-amino-acid chain: Alpha-2,8-sialyltransferase 8E (376 aa).

Residues 17–37 (TLLFIFICAFALVTLLQQILY) form a helical membrane-spanning segment. N-linked (GlcNAc...) asparagine glycosylation is present at asparagine 56. 2 disulfides stabilise this stretch: cysteine 164–cysteine 313 and cysteine 178–cysteine 373. Residues asparagine 192 and 214–216 (NPS) contribute to the substrate site. Asparagine 241 carries N-linked (GlcNAc...) asparagine glycosylation. 300–302 (STG) contributes to the substrate binding site. Residue histidine 348 is the Proton donor/acceptor of the active site.

This sequence belongs to the glycosyltransferase 29 family. In terms of tissue distribution, expressed in liver.

The protein localises to the golgi apparatus membrane. It catalyses the reaction a ganglioside GT1b (d18:1(4E)) + CMP-N-acetyl-beta-neuraminate = a ganglioside GQ1b (d18:1(4E)) + CMP + H(+). The catalysed reaction is a ganglioside GQ1c (d18:1(4E)) + CMP-N-acetyl-beta-neuraminate = a ganglioside GP1c (d18:1(4E)) + CMP + H(+). The enzyme catalyses a ganglioside GD3 (d18:1(4E)) + CMP-N-acetyl-beta-neuraminate = a ganglioside GT3 (d18:1(4E)) + CMP + H(+). It carries out the reaction a ganglioside GD1a (d18:1(4E)) + CMP-N-acetyl-beta-neuraminate = a ganglioside GT1a (d18:1(4E)) + CMP + H(+). It catalyses the reaction a ganglioside GM1b (d18:1(4E)) + CMP-N-acetyl-beta-neuraminate = a ganglioside GD1c (d18:1(4E)) + CMP + H(+). It participates in protein modification; protein glycosylation. Its function is as follows. Involved in the synthesis of gangliosides GD1c, GT1a, GQ1b, GP1c and GT3 from GD1a, GT1b, GM1b and GD3 respectively. The chain is Alpha-2,8-sialyltransferase 8E from Rattus norvegicus (Rat).